Reading from the N-terminus, the 326-residue chain is Acetyl-coenzyme A carboxylase carboxyl transferase subunit alpha (326 aa).

In terms of domain architecture, CoA carboxyltransferase C-terminal spans 44-298 (KLETRAMQLR…KQALLDNLDE (255 aa)).

This sequence belongs to the AccA family. In terms of assembly, acetyl-CoA carboxylase is a heterohexamer composed of biotin carboxyl carrier protein (AccB), biotin carboxylase (AccC) and two subunits each of ACCase subunit alpha (AccA) and ACCase subunit beta (AccD).

It localises to the cytoplasm. The catalysed reaction is N(6)-carboxybiotinyl-L-lysyl-[protein] + acetyl-CoA = N(6)-biotinyl-L-lysyl-[protein] + malonyl-CoA. It functions in the pathway lipid metabolism; malonyl-CoA biosynthesis; malonyl-CoA from acetyl-CoA: step 1/1. In terms of biological role, component of the acetyl coenzyme A carboxylase (ACC) complex. First, biotin carboxylase catalyzes the carboxylation of biotin on its carrier protein (BCCP) and then the CO(2) group is transferred by the carboxyltransferase to acetyl-CoA to form malonyl-CoA. This Nostoc sp. (strain PCC 7120 / SAG 25.82 / UTEX 2576) protein is Acetyl-coenzyme A carboxylase carboxyl transferase subunit alpha.